The sequence spans 460 residues: Phosphoenolpyruvate carboxylase (460 aa).

The protein belongs to the PEPCase type 2 family. Homotetramer. Requires Mg(2+) as cofactor.

It carries out the reaction oxaloacetate + phosphate = phosphoenolpyruvate + hydrogencarbonate. In terms of biological role, catalyzes the irreversible beta-carboxylation of phosphoenolpyruvate (PEP) to form oxaloacetate (OAA), a four-carbon dicarboxylic acid source for the tricarboxylic acid cycle. The polypeptide is Phosphoenolpyruvate carboxylase (Pyrobaculum arsenaticum (strain DSM 13514 / JCM 11321 / PZ6)).